Consider the following 312-residue polypeptide: Olfactory receptor 8K3 (312 aa).

At 1-25 (MEQHNLTTVNEFILTGITDIAELQA) the chain is on the extracellular side. Asn5 carries N-linked (GlcNAc...) asparagine glycosylation. The chain crosses the membrane as a helical span at residues 26 to 46 (PLFALFLMIYVISVMGNLGMI). Residues 47 to 54 (VLTKLDSR) lie on the Cytoplasmic side of the membrane. The helical transmembrane segment at 55–75 (LQTPMYFFLRHLAFMDLGYST) threads the bilayer. The Extracellular segment spans residues 76–99 (TVGPKMLVNFVVDKNIISYYFCAT). Residues Cys97 and Cys189 are joined by a disulfide bond. The chain crosses the membrane as a helical span at residues 100–120 (QLAFFLVFIGSELFILSAMSY). Residues 121–139 (DLYVAICNPLLYTVIMSRR) are Cytoplasmic-facing. Residues 140–160 (VCQVLVAIPYLYCTFISLLVT) traverse the membrane as a helical segment. Topologically, residues 161–197 (IKIFTLSFCGYNVISHFYCDSLPLLPLLCSNTHEIEL) are extracellular. A helical transmembrane segment spans residues 198–217 (IILIFAAIDLISSLLIVLLS). Topologically, residues 218-236 (YLLILVAILRMNSAGRQKA) are cytoplasmic. A helical membrane pass occupies residues 237–257 (FSTCGAHLTVVIVFYGTLLFM). Residues 258–270 (YVQPKSSHSFDTD) lie on the Extracellular side of the membrane. The chain crosses the membrane as a helical span at residues 271-291 (KVASIFYTLVIPMLNPLIYSL). Topologically, residues 292 to 312 (RNKDVKYALRRTWNNLCNIFV) are cytoplasmic.

This sequence belongs to the G-protein coupled receptor 1 family.

The protein localises to the cell membrane. In terms of biological role, odorant receptor. This Homo sapiens (Human) protein is Olfactory receptor 8K3 (OR8K3).